Reading from the N-terminus, the 499-residue chain is Putative DBH-like monooxygenase protein 2 (499 aa).

The first 16 residues, 1–16, serve as a signal peptide directing secretion; it reads MAHDLLFRLFPLLALG. Positions 40-156 constitute a DOMON domain; it reads NVIFLRWDFD…NTVRVLAAYG (117 aa). Tyr209 is a catalytic residue. 2 cysteine pairs are disulfide-bonded: Cys211/Cys261 and Cys248/Cys271. The N-linked (GlcNAc...) asparagine glycan is linked to Asn236. His241 and His242 together coordinate Cu cation. Residue Asn250 is glycosylated (N-linked (GlcNAc...) asparagine). Cu cation contacts are provided by His308, His389, and His391. 2 disulfide bridges follow: Cys365-Cys480 and Cys443-Cys465. His389 is a catalytic residue. Asn404 is a glycosylation site (N-linked (GlcNAc...) asparagine). Residue Met464 coordinates Cu cation. N-linked (GlcNAc...) asparagine glycosylation is present at Asn476.

This sequence belongs to the copper type II ascorbate-dependent monooxygenase family. Cu(2+) is required as a cofactor.

This is Putative DBH-like monooxygenase protein 2 (MOXD2P) from Homo sapiens (Human).